The sequence spans 383 residues: Insecticidal crystal protein Cry35Ab1 (383 aa).

Positions 26 to 138 (DDSGVSLMNK…NNPNQQWNLT (113 aa)) constitute a Ricin B-type lectin domain.

The protein belongs to the toxin_10 family. In terms of assembly, monomer in solution. Copurifies from parasporal inclusion bodies with Cry34Ab1. Post-translationally, proteolytic processing occurs near the C-terminus yielding a stable protein of approximately 40 kDa; this may be the active form of the protein.

Component of a binary insecticidal toxin active on western corn rootworm (WCR, Diabrotica virgifera subsp. virgifera Le Conte) and probably also on northern corn rootworm (D.barberi). Both proteins are required for maximal toxicity. The larval midgut epithelium is probably the primary target. This protein alone has no activity against southern corn rootworm (Diabrotica undecimpunctata howardi Barber), but it synergizes the toxic effect of its Cry34Ab1 partner. The 2 proteins individually and together form ion channels; channels made in the presence of the 2 proteins have higher conductance. Binds to WCR third instar midgut brush border membrane vesicles; binding improves over 10-fold in the presence of Cry34Ab1. The sequence is that of Insecticidal crystal protein Cry35Ab1 from Bacillus thuringiensis.